We begin with the raw amino-acid sequence, 190 residues long: MQKKFEDCVKTILEIIGENPNREGLIKTPNRVFKAYEFLTSGYTQNVKEILNDALFESSNNEMVLVRDIEFYSLCEHHLLPFFGRAHVAYIPNKKVVGLSKIPRLVEVFARRLQIQEQLTEQIAQALMENVDAKGVGVVIEARHMCVEMRGVQKANSTTTTSALRGIFLKNEKTREEFFSLINSAKQVRF.

Zn(2+) contacts are provided by Cys75, His78, and Cys146.

Belongs to the GTP cyclohydrolase I family. As to quaternary structure, homomer.

The enzyme catalyses GTP + H2O = 7,8-dihydroneopterin 3'-triphosphate + formate + H(+). It functions in the pathway cofactor biosynthesis; 7,8-dihydroneopterin triphosphate biosynthesis; 7,8-dihydroneopterin triphosphate from GTP: step 1/1. The chain is GTP cyclohydrolase 1 from Campylobacter jejuni subsp. jejuni serotype O:6 (strain 81116 / NCTC 11828).